The following is a 405-amino-acid chain: Arginine biosynthesis bifunctional protein ArgJ (405 aa).

T152, K178, T189, E276, N400, and T405 together coordinate substrate. The active-site Nucleophile is T189.

This sequence belongs to the ArgJ family. Heterotetramer of two alpha and two beta chains.

It localises to the cytoplasm. It carries out the reaction N(2)-acetyl-L-ornithine + L-glutamate = N-acetyl-L-glutamate + L-ornithine. The enzyme catalyses L-glutamate + acetyl-CoA = N-acetyl-L-glutamate + CoA + H(+). Its pathway is amino-acid biosynthesis; L-arginine biosynthesis; L-ornithine and N-acetyl-L-glutamate from L-glutamate and N(2)-acetyl-L-ornithine (cyclic): step 1/1. The protein operates within amino-acid biosynthesis; L-arginine biosynthesis; N(2)-acetyl-L-ornithine from L-glutamate: step 1/4. Its function is as follows. Catalyzes two activities which are involved in the cyclic version of arginine biosynthesis: the synthesis of N-acetylglutamate from glutamate and acetyl-CoA as the acetyl donor, and of ornithine by transacetylation between N(2)-acetylornithine and glutamate. The protein is Arginine biosynthesis bifunctional protein ArgJ of Pseudomonas putida (strain ATCC 47054 / DSM 6125 / CFBP 8728 / NCIMB 11950 / KT2440).